Reading from the N-terminus, the 530-residue chain is Estrogen receptor beta (530 aa).

The tract at residues 1–148 is modulating; that stretch reads MEIKNSPSSL…SPSAKRDAHF (148 aa). A Phosphoserine; alternate modification is found at S61. O-linked (GlcNAc) serine; alternate glycosylation is present at S61. 2 positions are modified to phosphoserine; by MAPK: S87 and S105. 2 consecutive NR C4-type zinc fingers follow at residues 149-169 and 185-209; these read CAVCSDYASGYHYGVWSCEGC and CPATNQCTIDKNRRKSCQACRLRKC. The segment at residues 149–214 is a DNA-binding region (nuclear receptor); that stretch reads CAVCSDYASG…RLRKCYEVGM (66 aa). In terms of domain architecture, NR LBD spans 264–498; sequence SPEQLVLTLL…DLLLEMLNAH (235 aa). The segment covering 506–515 has biased composition (polar residues); sequence SISGSECCST. The segment at 506-530 is disordered; it reads SISGSECCSTEDSKSKEGSQNLQSQ.

It belongs to the nuclear hormone receptor family. NR3 subfamily. In terms of assembly, binds DNA as a homodimer. Can form a heterodimer with ESR1. Interacts with NCOA1, NCOA3, NCOA5 and NCOA6 coactivators, leading to a strong increase of transcription of target genes. Interacts with UBE1C and AKAP13. Interacts with DNTTIP2. Interacts with CCDC62 in the presence of estradiol/E2; this interaction seems to enhance the transcription of target genes. Interacts with DNAAF4. Interacts with PRMT2. Interacts with CCAR2 (via N-terminus) in a ligand-independent manner. Interacts with RBM39, in the presence of estradiol (E2). Interacts with STUB1/CHIP. Post-translationally, phosphorylation at Ser-87 and Ser-105 recruits NCOA1. Expressed in prostate, ovary, Leydig cells and in epithelium of the efferent ductules and of the initial segment of the epididymis.

It localises to the nucleus. Nuclear hormone receptor. Binds estrogens with an affinity similar to that of ESR1/ER-alpha, and activates expression of reporter genes containing estrogen response elements (ERE) in an estrogen-dependent manner. In Mus musculus (Mouse), this protein is Estrogen receptor beta (Esr2).